Here is a 415-residue protein sequence, read N- to C-terminus: Mechanosensing system component YbdG (415 aa).

The Periplasmic portion of the chain corresponds to 1-24 (MQDLISQVEDLAGIEIDHTTSMVM). Residues 25–45 (IFGIIFLTAVVVHIILHWVVL) form a helical membrane-spanning segment. Residues 46–67 (RTFEKRAIASSRLWLQIITQNK) are Cytoplasmic-facing. The chain crosses the membrane as a helical span at residues 68-88 (LFHRLAFTLQGIIVNIQAVFW). Over 89–104 (LQKGTEAADILTTCAQ) the chain is Periplasmic. Residues 105–125 (LWIMMYALLSVFSLLDVILNL) form a helical membrane-spanning segment. Residues 126–148 (AQKFPAASQLPLKGIFQGIKLIG) lie on the Cytoplasmic side of the membrane. The chain crosses the membrane as a helical span at residues 149–169 (AILVGILMISLLIGQSPAILI). The Periplasmic segment spans residues 170–173 (SGLG). A helical membrane pass occupies residues 174 to 194 (AMAAVLMLVFKDPILGLVAGI). The Cytoplasmic portion of the chain corresponds to 195-415 (QLSANDMLKL…IRSLAGAFKQ (221 aa)).

This sequence belongs to the MscS (TC 1.A.23) family. In terms of assembly, homoheptamer.

The protein localises to the cell inner membrane. Its function is as follows. Functions as a component of a mechanosensing system that transmits signals triggered by external osmotic changes to intracellular factors. The sequence is that of Mechanosensing system component YbdG (ybdG) from Shigella flexneri.